The following is a 221-amino-acid chain: Probable septum site-determining protein MinC (221 aa).

The protein belongs to the MinC family. In terms of assembly, interacts with MinD and FtsZ.

Cell division inhibitor that blocks the formation of polar Z ring septums. Rapidly oscillates between the poles of the cell to destabilize FtsZ filaments that have formed before they mature into polar Z rings. Prevents FtsZ polymerization. In Aliivibrio salmonicida (strain LFI1238) (Vibrio salmonicida (strain LFI1238)), this protein is Probable septum site-determining protein MinC.